The following is a 239-amino-acid chain: NADH-quinone oxidoreductase subunit I 1 (239 aa).

4Fe-4S ferredoxin-type domains follow at residues Leu81 to Ala111 and Ala123 to Gly152. Residues Cys91, Cys94, Cys97, Cys101, Cys132, Cys135, Cys138, and Cys142 each contribute to the [4Fe-4S] cluster site.

This sequence belongs to the complex I 23 kDa subunit family. As to quaternary structure, NDH-1 is composed of 14 different subunits. Subunits NuoA, H, J, K, L, M, N constitute the membrane sector of the complex. [4Fe-4S] cluster is required as a cofactor.

It is found in the cell inner membrane. The enzyme catalyses a quinone + NADH + 5 H(+)(in) = a quinol + NAD(+) + 4 H(+)(out). NDH-1 shuttles electrons from NADH, via FMN and iron-sulfur (Fe-S) centers, to quinones in the respiratory chain. The immediate electron acceptor for the enzyme in this species is believed to be ubiquinone. Couples the redox reaction to proton translocation (for every two electrons transferred, four hydrogen ions are translocated across the cytoplasmic membrane), and thus conserves the redox energy in a proton gradient. The protein is NADH-quinone oxidoreductase subunit I 1 of Anaeromyxobacter dehalogenans (strain 2CP-C).